A 200-amino-acid polypeptide reads, in one-letter code: Recombination protein RecR (200 aa).

The C4-type zinc-finger motif lies at 57 to 72 (CRQCRTLTEEELCPQC). The Toprim domain maps to 80 to 175 (TLLCVVEGPM…ITSRIAHGVP (96 aa)).

It belongs to the RecR family.

Functionally, may play a role in DNA repair. It seems to be involved in an RecBC-independent recombinational process of DNA repair. It may act with RecF and RecO. This is Recombination protein RecR from Pseudomonas fluorescens (strain SBW25).